A 314-amino-acid chain; its full sequence is Homoserine O-acetyltransferase (314 aa).

Catalysis depends on Cys-142, which acts as the Acyl-thioester intermediate. Lys-163 and Ser-192 together coordinate substrate. The Proton acceptor role is filled by His-235. Residue Glu-237 is part of the active site. Substrate is bound at residue Arg-249.

This sequence belongs to the MetA family.

The protein localises to the cytoplasm. The catalysed reaction is L-homoserine + acetyl-CoA = O-acetyl-L-homoserine + CoA. It functions in the pathway amino-acid biosynthesis; L-methionine biosynthesis via de novo pathway; O-acetyl-L-homoserine from L-homoserine: step 1/1. Its function is as follows. Transfers an acetyl group from acetyl-CoA to L-homoserine, forming acetyl-L-homoserine. The sequence is that of Homoserine O-acetyltransferase from Streptococcus pneumoniae serotype 4 (strain ATCC BAA-334 / TIGR4).